Here is a 117-residue protein sequence, read N- to C-terminus: MDKKASRIRRATRARRKIAELCATRLVVHRTPRHTYAQVIAPNGSEVIAAASTVEKAIREQLGSTSNKAAAEAIGKLIAERAIEKGITNVAFDRSGFQYHGRVAALAESAREAGLKF.

This sequence belongs to the universal ribosomal protein uL18 family. In terms of assembly, part of the 50S ribosomal subunit; part of the 5S rRNA/L5/L18/L25 subcomplex. Contacts the 5S and 23S rRNAs.

In terms of biological role, this is one of the proteins that bind and probably mediate the attachment of the 5S RNA into the large ribosomal subunit, where it forms part of the central protuberance. This chain is Large ribosomal subunit protein uL18, found in Aliivibrio fischeri (strain ATCC 700601 / ES114) (Vibrio fischeri).